Here is a 210-residue protein sequence, read N- to C-terminus: Dephospho-CoA kinase (210 aa).

The DPCK domain maps to 15–210; sequence VLGLTGGIGC…HKGYLKLALK (196 aa). Residue 23–28 participates in ATP binding; sequence GCGKTA.

It belongs to the CoaE family.

Its subcellular location is the cytoplasm. The enzyme catalyses 3'-dephospho-CoA + ATP = ADP + CoA + H(+). The protein operates within cofactor biosynthesis; coenzyme A biosynthesis; CoA from (R)-pantothenate: step 5/5. Catalyzes the phosphorylation of the 3'-hydroxyl group of dephosphocoenzyme A to form coenzyme A. This chain is Dephospho-CoA kinase, found in Pseudoalteromonas translucida (strain TAC 125).